Reading from the N-terminus, the 291-residue chain is m-AAA protease-interacting protein 1, mitochondrial (291 aa).

The N-terminal 96 residues, 1–96 (MALAARLLPL…SLPASPSRSY (96 aa)), are a transit peptide targeting the mitochondrion.

As to quaternary structure, interacts with AFG3L2. Interacts with SPG7. Interacts with SMDT1/EMRE (via the N-terminal transit peptide); interaction is direct and takes place before maturation of SMDT1/EMRE.

It localises to the mitochondrion matrix. Its function is as follows. Promotes sorting of SMDT1/EMRE in mitochondria by ensuring its maturation. Interacts with the transit peptide region of SMDT1/EMRE precursor protein in the mitochondrial matrix, leading to protect it against protein degradation by YME1L1, thereby ensuring SMDT1/EMRE maturation by the mitochondrial processing peptidase (PMPCA and PMPCB). This Mus musculus (Mouse) protein is m-AAA protease-interacting protein 1, mitochondrial.